A 561-amino-acid chain; its full sequence is Carboxylesterase 1E (561 aa).

A signal peptide spans 1-18 (MCLYALILVFLAAFTAGG). N79 and N107 each carry an N-linked (GlcNAc...) asparagine glycan. A disulfide bridge connects residues C87 and C116. S221 acts as the Acyl-ester intermediate in catalysis. A disulfide bond links C273 and C284. Catalysis depends on charge relay system residues E353 and H466. A glycan (N-linked (GlcNAc...) asparagine) is linked at N489. The short motif at 558 to 561 (HTEL) is the Prevents secretion from ER element.

Belongs to the type-B carboxylesterase/lipase family. In terms of tissue distribution, expressed in liver.

It localises to the endoplasmic reticulum lumen. The protein localises to the microsome membrane. The catalysed reaction is a carboxylic ester + H2O = an alcohol + a carboxylate + H(+). It catalyses the reaction all-trans-retinyl hexadecanoate + H2O = all-trans-retinol + hexadecanoate + H(+). Functionally, involved in the detoxification of xenobiotics and in the activation of ester and amide prodrugs. Hydrolyzes retinyl esters. This chain is Carboxylesterase 1E (Ces1e), found in Rattus norvegicus (Rat).